The primary structure comprises 454 residues: Putative serine carboxypeptidase-like 23 (454 aa).

The first 22 residues, 1-22 (MARIHLIIILLVISSTSSSSSS), serve as a signal peptide directing secretion. Residues asparagine 52, asparagine 102, and asparagine 136 are each glycosylated (N-linked (GlcNAc...) asparagine). Cystine bridges form between cysteine 85/cysteine 338, cysteine 247/cysteine 258, and cysteine 282/cysteine 306. The active site involves serine 178. N-linked (GlcNAc...) asparagine glycosylation is found at asparagine 287 and asparagine 327. Active-site residues include aspartate 375 and histidine 427.

It belongs to the peptidase S10 family. Expression not detected.

Its subcellular location is the secreted. Functionally, probable carboxypeptidase. This is Putative serine carboxypeptidase-like 23 (SCPL23) from Arabidopsis thaliana (Mouse-ear cress).